Reading from the N-terminus, the 340-residue chain is Nesprin-4 (340 aa).

2 disordered regions span residues 1–86 (MAQF…DGGK) and 254–277 (HRRR…DAML). At 1-291 (MAQFPLLGHG…GVPAPASRRP (291 aa)) the chain is on the cytoplasmic side. Basic and acidic residues predominate over residues 53 to 63 (APEHFMDEPKS). Residues 283–340 (VPAPASRRPLTFLLLLLFLLLVGATLLLPLSGVPCCSHTRLARTPYLVLSYVNGLPPI) form the KASH domain. Residues 292–312 (LTFLLLLLFLLLVGATLLLPL) form a helical; Anchor for type IV membrane protein membrane-spanning segment. At 313–340 (SGVPCCSHTRLARTPYLVLSYVNGLPPI) the chain is on the perinuclear space side.

It belongs to the nesprin family. In terms of assembly, core component of LINC complexes which are composed of inner nuclear membrane SUN domain-containing proteins coupled to outer nuclear membrane KASH domain-containing nesprins. SUN and KASH domain-containing proteins seem to bind each other promiscuously; however, differentially expression of LINC complex constituents can give rise to specific assemblies. Probably part of a SUN1-containing LINC complex. Interacts with kinesins KIF5B and KLC1.

It localises to the nucleus outer membrane. Functionally, as a component of the LINC (LInker of Nucleoskeleton and Cytoskeleton) complex, involved in the connection between the nuclear lamina and the cytoskeleton. The nucleocytoplasmic interactions established by the LINC complex play an important role in the transmission of mechanical forces across the nuclear envelope and in nuclear movement and positioning. Behaves as a kinesin cargo, providing a functional binding site for kinesin-1 at the nuclear envelope. Hence may contribute to the establishment of secretory epithelial morphology, by promoting kinesin-dependent apical migration of the centrosome and Golgi apparatus and basal localization of the nucleus. This chain is Nesprin-4 (Syne4), found in Rattus norvegicus (Rat).